The chain runs to 201 residues: Small ribosomal subunit protein uS4c (201 aa).

The interval 20–44 (GLTSKRPRAGSDLRNQSRSGKKSQY) is disordered. Residues 89 to 152 (MRLDNILFRL…NSRTLVQNLL (64 aa)) enclose the S4 RNA-binding domain.

Belongs to the universal ribosomal protein uS4 family. In terms of assembly, part of the 30S ribosomal subunit. Contacts protein S5. The interaction surface between S4 and S5 is involved in control of translational fidelity.

It localises to the plastid. The protein localises to the chloroplast. One of the primary rRNA binding proteins, it binds directly to 16S rRNA where it nucleates assembly of the body of the 30S subunit. Functionally, with S5 and S12 plays an important role in translational accuracy. The protein is Small ribosomal subunit protein uS4c (rps4) of Aethionema cordifolium (Lebanon stonecress).